The sequence spans 208 residues: FMN-dependent NADH:quinone oxidoreductase (208 aa).

Residues 17–19 (SNS), 99–102 (MWNL), and 143–146 (SRGG) contribute to the FMN site.

The protein belongs to the azoreductase type 1 family. Homodimer. It depends on FMN as a cofactor.

It carries out the reaction 2 a quinone + NADH + H(+) = 2 a 1,4-benzosemiquinone + NAD(+). It catalyses the reaction N,N-dimethyl-1,4-phenylenediamine + anthranilate + 2 NAD(+) = 2-(4-dimethylaminophenyl)diazenylbenzoate + 2 NADH + 2 H(+). Functionally, quinone reductase that provides resistance to thiol-specific stress caused by electrophilic quinones. Also exhibits azoreductase activity. Catalyzes the reductive cleavage of the azo bond in aromatic azo compounds to the corresponding amines. The protein is FMN-dependent NADH:quinone oxidoreductase of Staphylococcus haemolyticus (strain JCSC1435).